The sequence spans 542 residues: CTP synthase (542 aa).

The interval 1 to 265 (MPRYIFITGG…DTEILRCFGI (265 aa)) is amidoligase domain. Residue Ser-13 coordinates CTP. Ser-13 contributes to the UTP binding site. 14-19 (SLGKGL) provides a ligand contact to ATP. Tyr-54 lines the L-glutamine pocket. Position 71 (Asp-71) interacts with ATP. Asp-71 and Glu-139 together coordinate Mg(2+). CTP contacts are provided by residues 146 to 148 (DIE), 186 to 191 (KTKPTQ), and Lys-222. UTP is bound by residues 186 to 191 (KTKPTQ) and Lys-222. 238 to 240 (RDA) is a binding site for ATP. Positions 298-541 (YVGLLDAYKS…IAAALHQSRM (244 aa)) constitute a Glutamine amidotransferase type-1 domain. Residue Gly-353 coordinates L-glutamine. Cys-380 functions as the Nucleophile; for glutamine hydrolysis in the catalytic mechanism. Residues 381–384 (YGMQ), Glu-404, and Arg-469 contribute to the L-glutamine site. Residues His-514 and Glu-516 contribute to the active site.

Belongs to the CTP synthase family. In terms of assembly, homotetramer.

The catalysed reaction is UTP + L-glutamine + ATP + H2O = CTP + L-glutamate + ADP + phosphate + 2 H(+). It carries out the reaction L-glutamine + H2O = L-glutamate + NH4(+). It catalyses the reaction UTP + NH4(+) + ATP = CTP + ADP + phosphate + 2 H(+). Its pathway is pyrimidine metabolism; CTP biosynthesis via de novo pathway; CTP from UDP: step 2/2. With respect to regulation, allosterically activated by GTP, when glutamine is the substrate; GTP has no effect on the reaction when ammonia is the substrate. The allosteric effector GTP functions by stabilizing the protein conformation that binds the tetrahedral intermediate(s) formed during glutamine hydrolysis. Inhibited by the product CTP, via allosteric rather than competitive inhibition. Catalyzes the ATP-dependent amination of UTP to CTP with either L-glutamine or ammonia as the source of nitrogen. Regulates intracellular CTP levels through interactions with the four ribonucleotide triphosphates. In Maricaulis maris (strain MCS10) (Caulobacter maris), this protein is CTP synthase.